We begin with the raw amino-acid sequence, 504 residues long: Pyruvate kinase (504 aa).

Substrate is bound at residue Arg53. 4 residues coordinate K(+): Asn55, Ser57, Asp88, and Thr89. 55–58 (NFSH) lines the ATP pocket. Residues Arg95 and Lys181 each contribute to the ATP site. A Mg(2+)-binding site is contributed by Glu246. Substrate is bound by residues Gly269, Asp270, and Thr302. Residue Asp270 coordinates Mg(2+).

This sequence belongs to the pyruvate kinase family. In terms of assembly, homotetramer. Mg(2+) is required as a cofactor. Requires K(+) as cofactor.

It is found in the cytoplasm. It carries out the reaction pyruvate + ATP = phosphoenolpyruvate + ADP + H(+). The protein operates within carbohydrate degradation; glycolysis; pyruvate from D-glyceraldehyde 3-phosphate: step 5/5. The chain is Pyruvate kinase (CDC19) from Candida albicans (strain SC5314 / ATCC MYA-2876) (Yeast).